Consider the following 323-residue polypeptide: Secreted frizzled-related protein 3 (323 aa).

The signal sequence occupies residues 1–32 (MVCCGPGRMLLGWAGLLVLAALCLLQVPGAQA). One can recognise an FZ domain in the interval 33 to 150 (AACEPVRIPL…VYDRGVCISP (118 aa)). Cystine bridges form between C35-C96, C43-C89, C80-C119, C108-C147, and C112-C136. A glycan (N-linked (GlcNAc...) asparagine) is linked at N49. The NTR domain maps to 178 to 298 (CKCKPVRATQ…WDMKLRHLGL (121 aa)). Residues 299–323 (GKTDASDSTQNQKSGRNSNPRPARS) are disordered. The span at 304–323 (SDSTQNQKSGRNSNPRPARS) shows a compositional bias: polar residues.

It belongs to the secreted frizzled-related protein (sFRP) family. As to quaternary structure, interacts with MYOC. As to expression, expressed in kidney, brain, testis. Weak expression in spleen and heart.

It localises to the secreted. Functionally, soluble frizzled-related proteins (sFRPS) function as modulators of Wnt signaling through direct interaction with Wnts. They have a role in regulating cell growth and differentiation in specific cell types. SFRP3/FRZB appears to be involved in limb skeletogenesis. Antagonist of Wnt8 signaling. Regulates chondrocyte maturation and long bone development. This chain is Secreted frizzled-related protein 3 (Frzb), found in Mus musculus (Mouse).